The sequence spans 512 residues: Maturase K (512 aa).

This sequence belongs to the intron maturase 2 family. MatK subfamily.

The protein localises to the plastid. The protein resides in the chloroplast. Functionally, usually encoded in the trnK tRNA gene intron. Probably assists in splicing its own and other chloroplast group II introns. This is Maturase K from Lemna gibba (Swollen duckweed).